Here is a 233-residue protein sequence, read N- to C-terminus: MATLLDIEGTVCSISFVHDILFPYALEKLPQLLKNEQFPIKPGGNQTSDLTPYLESFPEEYKQSAQALEDHVIDLTEKNVKAPYLKALQGYIWKSGYQSGEIKAPLYPDAVDYMKRVVDGGNKVFIYSSGSVPAQKLLFGYSSAGDLTPLISDYFDTVNAGPKMEAASYTTILKAIGFEADRVLFLSDNVREIEAAKKAGLRAYVAERPGNAKLTPQEKEDNVIKTSFEGIEI.

Mg(2+) is bound by residues Asp6 and Glu8. Substrate contacts are provided by residues 128–129 (SS) and Lys163. Residue Asp188 participates in Mg(2+) binding.

The protein belongs to the HAD-like hydrolase superfamily. MasA/MtnC family. As to quaternary structure, monomer. Requires Mg(2+) as cofactor.

It is found in the cytoplasm. The protein localises to the nucleus. It catalyses the reaction 5-methylsulfanyl-2,3-dioxopentyl phosphate + H2O = 1,2-dihydroxy-5-(methylsulfanyl)pent-1-en-3-one + phosphate. It functions in the pathway amino-acid biosynthesis; L-methionine biosynthesis via salvage pathway; L-methionine from S-methyl-5-thio-alpha-D-ribose 1-phosphate: step 3/6. It participates in amino-acid biosynthesis; L-methionine biosynthesis via salvage pathway; L-methionine from S-methyl-5-thio-alpha-D-ribose 1-phosphate: step 4/6. Its function is as follows. Bifunctional enzyme that catalyzes the enolization of 2,3-diketo-5-methylthiopentyl-1-phosphate (DK-MTP-1-P) into the intermediate 2-hydroxy-3-keto-5-methylthiopentenyl-1-phosphate (HK-MTPenyl-1-P), which is then dephosphorylated to form the acireductone 1,2-dihydroxy-3-keto-5-methylthiopentene (DHK-MTPene). The polypeptide is Enolase-phosphatase E1 (Yarrowia lipolytica (strain CLIB 122 / E 150) (Yeast)).